We begin with the raw amino-acid sequence, 213 residues long: Small ribosomal subunit protein uS4 (213 aa).

The interval 16–53 is disordered; the sequence is GTDLGLKSGVKPYDVKTKKSARPPGQHGVSRNKSSEYS. Residues 44–53 are compositionally biased toward polar residues; that stretch reads VSRNKSSEYS. Residues 97 to 163 enclose the S4 RNA-binding domain; the sequence is SRLDNVVYRM…EKSREQLRIK (67 aa).

The protein belongs to the universal ribosomal protein uS4 family. Part of the 30S ribosomal subunit. Contacts protein S5. The interaction surface between S4 and S5 is involved in control of translational fidelity.

One of the primary rRNA binding proteins, it binds directly to 16S rRNA where it nucleates assembly of the body of the 30S subunit. In terms of biological role, with S5 and S12 plays an important role in translational accuracy. In Psychrobacter arcticus (strain DSM 17307 / VKM B-2377 / 273-4), this protein is Small ribosomal subunit protein uS4.